The primary structure comprises 62 residues: Omega-conotoxin-like Bu11 (62 aa).

Residues 1-7 (ACQLITA) form the signal peptide. Positions 8–27 (EDSRGTQLHRALRSTSKVSK) are excised as a propeptide. 3 cysteine pairs are disulfide-bonded: Cys-31-Cys-46, Cys-38-Cys-49, and Cys-45-Cys-56.

Belongs to the conotoxin O1 superfamily. In terms of tissue distribution, expressed by the venom duct.

It localises to the secreted. Functionally, omega-conotoxins act at presynaptic membranes, they bind and block voltage-gated calcium channels (Cav). In Conus bullatus (Bubble cone), this protein is Omega-conotoxin-like Bu11.